The chain runs to 182 residues: Probable RNA 2'-phosphotransferase (182 aa).

Belongs to the KptA/TPT1 family.

Functionally, removes the 2'-phosphate from RNA via an intermediate in which the phosphate is ADP-ribosylated by NAD followed by a presumed transesterification to release the RNA and generate ADP-ribose 1''-2''-cyclic phosphate (APPR&gt;P). May function as an ADP-ribosylase. This chain is Probable RNA 2'-phosphotransferase, found in Pseudomonas aeruginosa (strain UCBPP-PA14).